Reading from the N-terminus, the 140-residue chain is Small ribosomal subunit protein uS12 (140 aa).

D102 bears the 3-methylthioaspartic acid mark.

The protein belongs to the universal ribosomal protein uS12 family. In terms of assembly, part of the 30S ribosomal subunit. Contacts proteins S8 and S17. May interact with IF1 in the 30S initiation complex.

Its function is as follows. With S4 and S5 plays an important role in translational accuracy. Interacts with and stabilizes bases of the 16S rRNA that are involved in tRNA selection in the A site and with the mRNA backbone. Located at the interface of the 30S and 50S subunits, it traverses the body of the 30S subunit contacting proteins on the other side and probably holding the rRNA structure together. The combined cluster of proteins S8, S12 and S17 appears to hold together the shoulder and platform of the 30S subunit. In Geobacillus stearothermophilus (Bacillus stearothermophilus), this protein is Small ribosomal subunit protein uS12.